We begin with the raw amino-acid sequence, 492 residues long: MAPVGVEKKLLLGPNGPAVAAAGDLTSEEEEGQSLWSSILSEVSTRARSKLPSGKNILVFGEDGSGKTTLMTKLQGAEHGKKGRGLEYLYLSVHDEDRDDHTRCNVWILDGDLYHKGLLKFAVSAESLPETLVIFVADMSRPWTVMESLQKWASVLREHIDKMKIPPEKMRELERKFVKDFQDYMEPEEGCQGSPQRRGPLTSGSDEENVALPLGDNVLTHNLGIPVLVVCTKCDAVSVLEKEHDYRDEHLDFIQSHLRRFCLQYGAALIYTSVKEEKNLDLLYKYIVHKTYGFHFTTPALVVEKDAVFIPAGWDNEKKIAILHENFTTVKPEDAYEDFIVKPPVRKLVHDKELAAEDEQVFLMKQQSLLAKQPATPTRASESPARGPSGSPRTQGRGGPASVPSSSPGTSVKKPDPNIKNNAASEGVLASFFNSLLSKKTGSPGSPGAGGVQSTAKKSGQKTVLSNVQEELDRMTRKPDSMVTNSSTENEA.

61-68 serves as a coordination point for ATP; that stretch reads GEDGSGKT. 3 disordered regions span residues 187 to 206, 371 to 423, and 437 to 492; these read PEEG…SGSD, AKQP…KNNA, and LSKK…ENEA. Ser-194 is modified (phosphoserine). The span at 371–381 shows a compositional bias: polar residues; that stretch reads AKQPATPTRAS. Phosphoserine occurs at positions 383 and 391. Arg-397 is modified (omega-N-methylarginine). The segment covering 400 to 412 has biased composition (low complexity); that stretch reads PASVPSSSPGTSV. Position 441 is a phosphothreonine (Thr-441). Phosphoserine is present on residues Ser-443 and Ser-446. The span at 452 to 469 shows a compositional bias: polar residues; it reads VQSTAKKSGQKTVLSNVQ. Basic and acidic residues predominate over residues 471 to 480; the sequence is ELDRMTRKPD. Positions 482 to 492 are enriched in polar residues; the sequence is MVTNSSTENEA.

The protein belongs to the dynein light intermediate chain family. As to quaternary structure, homodimer. The cytoplasmic dynein 1 complex consists of two catalytic heavy chains (HCs) and a number of non-catalytic subunits presented by intermediate chains (ICs), light intermediate chains (LICs) and light chains (LCs); the composition seems to vary in respect to the IC, LIC and LC composition. The heavy chain homodimer serves as a scaffold for the probable homodimeric assembly of the respective non-catalytic subunits. The ICs and LICs bind directly to the HC dimer and the LCs assemble on the IC dimer. Interacts with DYNC1H1; DYNC1LI1 and DYNC1LI2 bind mutually exclusive to DYNC1H.

The protein resides in the cytoplasm. It is found in the cytoskeleton. Functionally, acts as one of several non-catalytic accessory components of the cytoplasmic dynein 1 complex that are thought to be involved in linking dynein to cargos and to adapter proteins that regulate dynein function. Cytoplasmic dynein 1 acts as a motor for the intracellular retrograde motility of vesicles and organelles along microtubules. May play a role in binding dynein to membranous organelles or chromosomes. In Homo sapiens (Human), this protein is Cytoplasmic dynein 1 light intermediate chain 2.